Reading from the N-terminus, the 599-residue chain is Elongation factor 4 (599 aa).

The region spanning Lys-4 to Leu-186 is the tr-type G domain. Residues Asp-16–Thr-21 and Asn-133–Asp-136 each bind GTP.

Belongs to the TRAFAC class translation factor GTPase superfamily. Classic translation factor GTPase family. LepA subfamily.

It localises to the cell membrane. It catalyses the reaction GTP + H2O = GDP + phosphate + H(+). Its function is as follows. Required for accurate and efficient protein synthesis under certain stress conditions. May act as a fidelity factor of the translation reaction, by catalyzing a one-codon backward translocation of tRNAs on improperly translocated ribosomes. Back-translocation proceeds from a post-translocation (POST) complex to a pre-translocation (PRE) complex, thus giving elongation factor G a second chance to translocate the tRNAs correctly. Binds to ribosomes in a GTP-dependent manner. The polypeptide is Elongation factor 4 (Ureaplasma urealyticum serovar 10 (strain ATCC 33699 / Western)).